The following is a 103-amino-acid chain: Small ribosomal subunit protein uS10 (103 aa).

The protein belongs to the universal ribosomal protein uS10 family. As to quaternary structure, part of the 30S ribosomal subunit.

Functionally, involved in the binding of tRNA to the ribosomes. The sequence is that of Small ribosomal subunit protein uS10 from Chlorobium limicola (strain DSM 245 / NBRC 103803 / 6330).